The sequence spans 860 residues: Pentatricopeptide repeat-containing protein At2g40720 (860 aa).

PPR repeat units lie at residues 59–93 (SVFT…GWRY), 94–124 (DPFI…WSQS), 132–166 (DVTV…GVRP), 167–203 (DAFS…SLDT), 204–234 (DSFL…IEDK), 236–270 (NVVL…SVKL), 271–305 (VSTS…GLHN), 306–340 (DPYV…RLEI), 341–371 (WNAM…SVLP), 372–406 (DSFT…PIQS), 407–437 (TSTI…MEEK), 438–472 (DMVA…DDSL), 475–509 (DSDI…GLVL), 510–540 (NVFV…MSTE), 541–575 (NMVA…GIFP), 576–610 (DSVS…GIPS), 611–641 (DTHL…MQHK), 642–676 (SLIT…GESP), 677–707 (DDVT…MKQD), and 713–743 (NMEH…MPIE). The segment at 748 to 823 (IWLCLLSASR…QPGCSWIEVS (76 aa)) is type E motif. The type E(+) motif stretch occupies residues 824-854 (DRTNVFFSGGSSSPMKAEIFNVLNRLKSNMV).

The protein belongs to the PPR family. PCMP-E subfamily.

This is Pentatricopeptide repeat-containing protein At2g40720 (PCMP-E26) from Arabidopsis thaliana (Mouse-ear cress).